Reading from the N-terminus, the 251-residue chain is Zinc import ATP-binding protein ZnuC (251 aa).

The region spanning 5–220 (VSLENVSVSF…PEFISMFGPR (216 aa)) is the ABC transporter domain. 37 to 44 (GPNGAGKS) serves as a coordination point for ATP.

It belongs to the ABC transporter superfamily. Zinc importer (TC 3.A.1.15.5) family. The complex is composed of two ATP-binding proteins (ZnuC), two transmembrane proteins (ZnuB) and a solute-binding protein (ZnuA).

It is found in the cell inner membrane. It catalyses the reaction Zn(2+)(out) + ATP(in) + H2O(in) = Zn(2+)(in) + ADP(in) + phosphate(in) + H(+)(in). In terms of biological role, part of the ABC transporter complex ZnuABC involved in zinc import. Responsible for energy coupling to the transport system. This Escherichia coli O157:H7 protein is Zinc import ATP-binding protein ZnuC.